The chain runs to 355 residues: DNA polymerase IV (355 aa).

In terms of domain architecture, UmuC spans 6 to 187; it reads IIHVDMDAFY…LPVGKIHGVG (182 aa). Asp-10 and Asp-105 together coordinate Mg(2+). Residue Glu-106 is part of the active site.

It belongs to the DNA polymerase type-Y family. In terms of assembly, monomer. Requires Mg(2+) as cofactor.

The protein localises to the cytoplasm. It carries out the reaction DNA(n) + a 2'-deoxyribonucleoside 5'-triphosphate = DNA(n+1) + diphosphate. Functionally, poorly processive, error-prone DNA polymerase involved in untargeted mutagenesis. Copies undamaged DNA at stalled replication forks, which arise in vivo from mismatched or misaligned primer ends. These misaligned primers can be extended by PolIV. Exhibits no 3'-5' exonuclease (proofreading) activity. May be involved in translesional synthesis, in conjunction with the beta clamp from PolIII. The chain is DNA polymerase IV from Alkalilimnicola ehrlichii (strain ATCC BAA-1101 / DSM 17681 / MLHE-1).